Reading from the N-terminus, the 267-residue chain is MEMO1 family protein MM_1761 (267 aa).

The protein belongs to the MEMO1 family.

The sequence is that of MEMO1 family protein MM_1761 from Methanosarcina mazei (strain ATCC BAA-159 / DSM 3647 / Goe1 / Go1 / JCM 11833 / OCM 88) (Methanosarcina frisia).